The chain runs to 386 residues: Zinc finger CCCH domain-containing protein 2 (386 aa).

2 C3H1-type zinc fingers span residues 116 to 143 (HYSGTACPDFRKGGCKRGDACEYAHGVF) and 151 to 175 (RYRTQPCKDGTACRRRVCFFAHTPD). Disordered regions lie at residues 180-200 (LPAQQSSPRSVASSPLAESYD) and 220-252 (SSPTSTLMSPPKSPPSESPPLSPDGAAAIRRGS). Residues 182–192 (AQQSSPRSVAS) show a composition bias toward polar residues. A compositionally biased stretch (low complexity) spans 220–229 (SSPTSTLMSP). The span at 230-241 (PKSPPSESPPLS) shows a compositional bias: pro residues.

The protein resides in the nucleus. Involved in leaf senescence delay. May repress jasmonic acid (JA) signaling role in promoting leaf senescence. May regulate panicle development and pollination/fertilization process. The polypeptide is Zinc finger CCCH domain-containing protein 2 (Oryza sativa subsp. japonica (Rice)).